A 294-amino-acid chain; its full sequence is Transcription factor nsy-7 (294 aa).

Disordered stretches follow at residues 43–119 (CNLR…TPDL) and 167–191 (LRLP…DSPL). Polar residues-rich tracts occupy residues 52 to 63 (DQPTTSSNSVKE) and 81 to 115 (RRQS…SNDP). Positions 192 to 232 (QTRMKGWQREYIKEVIKDSHYPTEEELRDIEQKCDLSRKQI) form a DNA-binding region, homeobox; atypical. Positions 238 to 274 (KRLTNPNRKPRVNHHDEKRKEQEERDSLADPDDDMIN) are disordered. A compositionally biased stretch (basic and acidic residues) spans 250-265 (NHHDEKRKEQEERDSL).

In terms of tissue distribution, expressed widely, including gut, the amphid sheath glial cells, and head and tail neurons including AWC, ASE, and ASH. Expressed in AWC (ON) olfactory neuron but not AWC (OFF).

It is found in the nucleus. Transcriptional regulator which binds DNA consensus sequence 5'-CCTTAAC-3'. Plays a role in establishing and maintaining asymmetric cell fates in chemosensory AWC neurons during larval neuronal development. This is achieved by repressing the expression of multiple AWC (OFF) genes, including srsx-3 and hlh-11 in the AWC (ON) neuron. Activates expression of sox-2 in the AWC (ON) neuron. In Caenorhabditis elegans, this protein is Transcription factor nsy-7.